The following is a 243-amino-acid chain: MNSTQDTIYAQACEHISDFQFDDRVAGVFSDMIRRSVPGYGQIINTLGDFADKCVTPNSKIYDLGCSLGAATLSVRRRIEGRGCEIIAVDNSESMIERCKQNLSAYVSETPVDLICADIRDIEIQDASMVILNFTMQFLAPEDRQTLIAKIYQGLKPGGILVLSEKLVFEDEPVQHLLDELHLDFKRANGYSELEISQKRSSLEHVMKPDTLPQHQQRLKAQGFSHFSVWFQCFNFASMVAIK.

Residues Y40, 65–67, 90–91, 118–119, N133, and R200 contribute to the S-adenosyl-L-methionine site; these read GCS, DN, and DI.

This sequence belongs to the class I-like SAM-binding methyltransferase superfamily. Cx-SAM synthase family. In terms of assembly, homodimer.

The enzyme catalyses prephenate + S-adenosyl-L-methionine = carboxy-S-adenosyl-L-methionine + 3-phenylpyruvate + H2O. Functionally, catalyzes the conversion of S-adenosyl-L-methionine (SAM) to carboxy-S-adenosyl-L-methionine (Cx-SAM). In Shewanella loihica (strain ATCC BAA-1088 / PV-4), this protein is Carboxy-S-adenosyl-L-methionine synthase.